Consider the following 229-residue polypeptide: Ribonuclease T (229 aa).

In terms of domain architecture, Exonuclease spans 23 to 197 (VIIDVETAGF…YDTERTAKLF (175 aa)). 4 residues coordinate Mg(2+): aspartate 26, glutamate 28, histidine 184, and aspartate 189. Histidine 184 functions as the Proton donor/acceptor in the catalytic mechanism.

Belongs to the RNase T family. Homodimer. Mg(2+) is required as a cofactor.

In terms of biological role, trims short 3' overhangs of a variety of RNA species, leaving a one or two nucleotide 3' overhang. Responsible for the end-turnover of tRNA: specifically removes the terminal AMP residue from uncharged tRNA (tRNA-C-C-A). Also appears to be involved in tRNA biosynthesis. The chain is Ribonuclease T from Haemophilus influenzae (strain 86-028NP).